The following is a 193-amino-acid chain: MIALEKDEKLLILNWLRNLLARELSDEQLQTLQAVEFSQFFAFLAEIGFEKQSSALQQEIQKIALFQHPRLELAADFTQCFLLEGKVSALPYASAYLDGQSLKQNLAKMDRYLEHFQLQINRQTNEPSDHLVVYLEVLIKLLEQNKTTEAKEFIQQQLLTWFPQFAAKTEKTNIRTNFYPILVKLLFAVLQNF.

This sequence belongs to the TorD/DmsD family. TorD subfamily.

Its subcellular location is the cytoplasm. Its function is as follows. Involved in the biogenesis of TorA. Acts on TorA before the insertion of the molybdenum cofactor and, as a result, probably favors a conformation of the apoenzyme that is competent for acquiring the cofactor. The polypeptide is Chaperone protein TorD (Actinobacillus succinogenes (strain ATCC 55618 / DSM 22257 / CCUG 43843 / 130Z)).